Consider the following 249-residue polypeptide: uncharacterized protein (249 aa).

Residue 7–14 (GKGGCGKS) participates in ATP binding.

This is an uncharacterized protein from Methanocaldococcus jannaschii (strain ATCC 43067 / DSM 2661 / JAL-1 / JCM 10045 / NBRC 100440) (Methanococcus jannaschii).